Reading from the N-terminus, the 209-residue chain is Outer-membrane lipoprotein carrier protein (209 aa).

Residues 1 to 22 (MKKLLLTLAMVPAVLFSPTAWG) form the signal peptide.

The protein belongs to the LolA family. In terms of assembly, monomer.

It is found in the periplasm. Participates in the translocation of lipoproteins from the inner membrane to the outer membrane. Only forms a complex with a lipoprotein if the residue after the N-terminal Cys is not an aspartate (The Asp acts as a targeting signal to indicate that the lipoprotein should stay in the inner membrane). The chain is Outer-membrane lipoprotein carrier protein from Alcanivorax borkumensis (strain ATCC 700651 / DSM 11573 / NCIMB 13689 / SK2).